The chain runs to 160 residues: Glyoxalase domain-containing protein 5 (160 aa).

The region spanning Arg-33–Tyr-153 is the VOC domain.

This sequence belongs to the glyoxalase I family.

The polypeptide is Glyoxalase domain-containing protein 5 (glod5) (Xenopus laevis (African clawed frog)).